We begin with the raw amino-acid sequence, 505 residues long: Aspartyl/glutamyl-tRNA(Asn/Gln) amidotransferase subunit B (505 aa).

Belongs to the GatB/GatE family. GatB subfamily. In terms of assembly, heterotrimer of A, B and C subunits.

The enzyme catalyses L-glutamyl-tRNA(Gln) + L-glutamine + ATP + H2O = L-glutaminyl-tRNA(Gln) + L-glutamate + ADP + phosphate + H(+). The catalysed reaction is L-aspartyl-tRNA(Asn) + L-glutamine + ATP + H2O = L-asparaginyl-tRNA(Asn) + L-glutamate + ADP + phosphate + 2 H(+). In terms of biological role, allows the formation of correctly charged Asn-tRNA(Asn) or Gln-tRNA(Gln) through the transamidation of misacylated Asp-tRNA(Asn) or Glu-tRNA(Gln) in organisms which lack either or both of asparaginyl-tRNA or glutaminyl-tRNA synthetases. The reaction takes place in the presence of glutamine and ATP through an activated phospho-Asp-tRNA(Asn) or phospho-Glu-tRNA(Gln). The sequence is that of Aspartyl/glutamyl-tRNA(Asn/Gln) amidotransferase subunit B from Streptomyces avermitilis (strain ATCC 31267 / DSM 46492 / JCM 5070 / NBRC 14893 / NCIMB 12804 / NRRL 8165 / MA-4680).